The primary structure comprises 401 residues: MTYNQPNNQGFYGQFGGQFVPETLMTAVKELEVAYEDSKKDPVFQAELKELLKDYVGRENPLYFAKRLTEYAGGAKIYLKREDLNHTGAHKINNALGQVLLAKKMGKNKVIAETGAGQHGVATATAAALFGMECTIYMGEEDVKRQSLNVFRMELLGAKVHSVTDGSRVLKDAVNAALRAWVAQVEDTHYVMGSVLGPHPFPQIVRDYQAVIGQEARAQFLEKENKLPDALVACVGGGSNSMGLFYPFVNDESVEMYGVEAAGLGIDTPHHAATITKGRPGVLHGTLMDVLQDENGQILEAFSISAGLDYPGIGPEHSYFNAVGRAKYVDITDEEALEGFKILSRTEGIIPALESSHAIAYAVKLAKELGSEKTMIVCLSGRGDKDVVQVKERLEAEKEVK.

Residue Lys-91 is modified to N6-(pyridoxal phosphate)lysine.

Belongs to the TrpB family. Tetramer of two alpha and two beta chains. Pyridoxal 5'-phosphate serves as cofactor.

The enzyme catalyses (1S,2R)-1-C-(indol-3-yl)glycerol 3-phosphate + L-serine = D-glyceraldehyde 3-phosphate + L-tryptophan + H2O. The protein operates within amino-acid biosynthesis; L-tryptophan biosynthesis; L-tryptophan from chorismate: step 5/5. In terms of biological role, the beta subunit is responsible for the synthesis of L-tryptophan from indole and L-serine. The polypeptide is Tryptophan synthase beta chain (Lactococcus lactis subsp. cremoris (strain SK11)).